Reading from the N-terminus, the 524-residue chain is GMP synthase [glutamine-hydrolyzing] (524 aa).

The 199-residue stretch at 9 to 207 (RILILDFGSQ…VIHICQCIPN (199 aa)) folds into the Glutamine amidotransferase type-1 domain. Cys-86 acts as the Nucleophile in catalysis. Catalysis depends on residues His-181 and Glu-183. In terms of domain architecture, GMPS ATP-PPase spans 208–399 (WTTKHIIEDS…LGLPADLIYR (192 aa)). 235–241 (SGGVDSA) contacts ATP.

As to quaternary structure, homodimer.

It catalyses the reaction XMP + L-glutamine + ATP + H2O = GMP + L-glutamate + AMP + diphosphate + 2 H(+). It participates in purine metabolism; GMP biosynthesis; GMP from XMP (L-Gln route): step 1/1. In terms of biological role, catalyzes the synthesis of GMP from XMP. This chain is GMP synthase [glutamine-hydrolyzing], found in Coxiella burnetii (strain CbuG_Q212) (Coxiella burnetii (strain Q212)).